Consider the following 2016-residue polypeptide: Cell adhesion molecule Dscam1 (2016 aa).

The first 28 residues, 1-28 (MNMPNERLKWLMLFAAVALIACGSQTLA), serve as a signal peptide directing secretion. At 29–1618 (ANPPDADQKG…TIRIILSNLN (1590 aa)) the chain is on the extracellular side. Ig-like C2-type domains follow at residues 39 to 134 (PVFL…VHVR), 138 to 230 (AQYY…TRLS), 247 to 338 (PKIN…TVLT), 342 to 421 (PLSA…AELK), 428 to 522 (PPVI…AKLN), 527 to 613 (PYIR…LEVQ), 618 to 712 (PQVL…LQVN), 715 to 807 (PRWI…IMIS), and 812 to 904 (PEFT…ASIN). Asn53 is a glycosylation site (N-linked (GlcNAc...) asparagine). A disulfide bond links Cys61 and Cys117. Zn(2+) is bound by residues Asp144, Asn146, and Leu161. 13 disulfides stabilise this stretch: Cys160-Cys217, Cys160-Thr219, Cys160-Lys220, Cys269-Cys322, Pro270-Val323, Ala276-Gly329, Cys364-Cys405, Cys450-Cys506, Cys547-Cys596, Cys640-Cys694, Val641-Cys694, Val641-Ile695, and Cys736-Cys790. N-linked (GlcNAc...) asparagine glycosylation occurs at Asn325. N-linked (GlcNAc...) asparagine glycosylation is found at Asn492 and Asn577. An N-linked (GlcNAc...) asparagine glycan is attached at Asn820. Cysteines 833 and 890 form a disulfide. Fibronectin type-III domains lie at 913 to 1007 (MPYA…TAEE), 1012 to 1116 (KPQN…TPSQ), 1117 to 1213 (PPSD…TEPD), and 1217 to 1310 (APTD…PSDQ). N-linked (GlcNAc...) asparagine glycosylation is found at Asn1022, Asn1055, and Asn1186. Positions 1312–1394 (PAKIASFDDT…ENSIAKDSIT (83 aa)) constitute an Ig-like C2-type 10 domain. The cysteines at positions 1334 and 1382 are disulfide-linked. 2 consecutive Fibronectin type-III domains span residues 1402-1495 (PPQS…TKGQ) and 1499-1594 (LPEK…TGGT). A helical transmembrane segment spans residues 1619–1639 (LVVPVVAALLVIIIAIIVICI). Over 1640–2016 (LRSKGNHHKD…GFTAYDTMAV (377 aa)) the chain is Cytoplasmic. A PXXP motif 1; SH3-binding motif is present at residues 1685-1688 (PPVP). The segment at 1688–1719 (PGSNYNTCDRIKRGRGGLRSNHSTWDPRRNPN) is disordered. The PXXP motif 2; SH3-binding motif lies at 1727–1730 (PPVP). Disordered regions lie at residues 1787–1846 (GHAG…DDPA) and 1862–2016 (SQGG…TMAV). Residues 1826 to 1836 (KNSQGGQSSIY) are compositionally biased toward polar residues. A YXXP motif 1; potential SH2-binding motif is present at residues 1842-1845 (YDDP). Residues 1875 to 1878 (YDDP) carry the YXXP motif 2; potential SH2-binding motif. The span at 1897–1918 (GQPYDHYGSRGSMGRRSIGSAR) shows a compositional bias: low complexity. A Polyproline tract (probable SH3-binding) motif is present at residues 1925-1932 (PEPPPPPP). 2 stretches are compositionally biased toward basic and acidic residues: residues 1944–1962 (DSKE…DHGP) and 1974–1993 (QPKD…RNET). Over residues 1994–2004 (GPKQLQLQQAN) the composition is skewed to polar residues.

Homodimer (via extracellular region); alternative splicing produces a potential 19,008 different ectodomains and the majority of these show strong isoform-specific homodimerization. Interacts (via cytoplasmic domain) with dock/dreadlocks (via SH2 and SH3 domains); the interaction is direct and may require Dscam1 to be phosphorylated. Post-translationally, phosphorylated on tyrosine residues in the intracellular domain. Tyrosine protein kinase Src42A and possibly Src64B are involved in this phosphorylation. In terms of processing, glycosylation on Asn-53 and Asn-325 is involved in stabilizing dimerization. Proteolytically processed, probably to generate a secreted form. Secreted into the hemolymph (at protein level). Expressed in brain and eye-antennal imaginal disks, including R3/R4 and R7 photoreceptor cells. Individual R3/R4 cells express between 14 and 50 randomly generated mRNAs encoding distinct isoforms.

It is found in the cell membrane. Its subcellular location is the cell projection. The protein resides in the neuron projection. It localises to the axon. The protein localises to the perikaryon. It is found in the dendrite. Its subcellular location is the secreted. Its function is as follows. Cell surface receptor involved in guidance and targeting of growing nerve axons. Required during Bolwig's organ differentiation for accurate and efficient targeting of photoreceptor neuron axons to their synaptic targets in the brain via the P2 intermediate target neuron. Involved in isoneural self-avoidance during dendrite arborization but not in heteroneural recognition and repulsion during tiling by related neurons of the same class. Involved in regulating axon bifurcation and divergent extension in the developing mushroom body. Essential for axon arborisation in ellipsoid body. Exhibits an extraordinary level of molecular diversity resulting from alternative splicing. Isoforms differing in their ectodomain makeup show a high degree of functional redundancy while isoforms with different transmembrane domains are involved in different neuronal morphogenetic processes and are differentially targeted to dendrites or axons. The vast majority of isoforms exhibit strong isoform-specific homophilic binding. Individual cells express a distinct randomly generated repertoire of isoforms. Cell surfaces bearing identical repertoires of Dscam1 isoforms, such as those from the same cell, trigger recognition and avoidance. A subset of isoforms is expressed in fat body cells and hemocytes, cells that are part of the insect immune response, and these isoforms are secreted into the hemolymph. The secreted form comprising the ectodomain can bind to bacteria, such as Escherichia coli, and may act as an opsonin enhancing their phagocytosis by hemocytes. The chain is Cell adhesion molecule Dscam1 from Drosophila melanogaster (Fruit fly).